The primary structure comprises 303 residues: Proteasome subunit beta (303 aa).

Positions M1–G67 are cleaved as a propeptide — removed in mature form; by autocatalysis. Residue T68 is the Nucleophile of the active site.

This sequence belongs to the peptidase T1B family. In terms of assembly, the 20S proteasome core is composed of 14 alpha and 14 beta subunits that assemble into four stacked heptameric rings, resulting in a barrel-shaped structure. The two inner rings, each composed of seven catalytic beta subunits, are sandwiched by two outer rings, each composed of seven alpha subunits. The catalytic chamber with the active sites is on the inside of the barrel. Has a gated structure, the ends of the cylinder being occluded by the N-termini of the alpha-subunits. Is capped by the proteasome-associated ATPase, ARC.

Its subcellular location is the cytoplasm. It catalyses the reaction Cleavage of peptide bonds with very broad specificity.. Its pathway is protein degradation; proteasomal Pup-dependent pathway. Its activity is regulated as follows. The formation of the proteasomal ATPase ARC-20S proteasome complex, likely via the docking of the C-termini of ARC into the intersubunit pockets in the alpha-rings, may trigger opening of the gate for substrate entry. Interconversion between the open-gate and close-gate conformations leads to a dynamic regulation of the 20S proteasome proteolysis activity. Functionally, component of the proteasome core, a large protease complex with broad specificity involved in protein degradation. The polypeptide is Proteasome subunit beta (Mycobacterium avium (strain 104)).